The primary structure comprises 183 residues: Ribonuclease H (183 aa).

The RNase H type-1 domain maps to 2–151; that stretch reads SQARFIAFSD…VDQLAQAAAR (150 aa). Mg(2+)-binding residues include Asp11, Glu57, Asp79, and Asp143.

The protein belongs to the RNase H family. In terms of assembly, monomer. Requires Mg(2+) as cofactor.

Its subcellular location is the cytoplasm. It catalyses the reaction Endonucleolytic cleavage to 5'-phosphomonoester.. Endonuclease that specifically degrades the RNA of RNA-DNA hybrids. The sequence is that of Ribonuclease H from Anaeromyxobacter sp. (strain K).